Reading from the N-terminus, the 404-residue chain is Chorismate synthase (404 aa).

Positions 40 and 46 each coordinate NADP(+). FMN contacts are provided by residues 133–135 (RSS), 266–267 (QA), Gly313, 328–332 (KPIPT), and Arg354. The tract at residues 283–320 (PGSQVHDPIEPREDGAQAYPRRTNHAGGTEGGTTTGMP) is disordered. Residues 337–357 (LDSVDTATGEPEPTRYERSDI) are disordered.

This sequence belongs to the chorismate synthase family. Homotetramer. Requires FMNH2 as cofactor.

The enzyme catalyses 5-O-(1-carboxyvinyl)-3-phosphoshikimate = chorismate + phosphate. It participates in metabolic intermediate biosynthesis; chorismate biosynthesis; chorismate from D-erythrose 4-phosphate and phosphoenolpyruvate: step 7/7. In terms of biological role, catalyzes the anti-1,4-elimination of the C-3 phosphate and the C-6 proR hydrogen from 5-enolpyruvylshikimate-3-phosphate (EPSP) to yield chorismate, which is the branch point compound that serves as the starting substrate for the three terminal pathways of aromatic amino acid biosynthesis. This reaction introduces a second double bond into the aromatic ring system. This is Chorismate synthase from Salinibacter ruber (strain DSM 13855 / M31).